Reading from the N-terminus, the 1162-residue chain is DNA-directed RNA polymerase subunit beta (1162 aa).

Belongs to the RNA polymerase beta chain family. In terms of assembly, the RNAP catalytic core consists of 2 alpha, 1 beta, 1 beta' and 1 omega subunit. When a sigma factor is associated with the core the holoenzyme is formed, which can initiate transcription.

It catalyses the reaction RNA(n) + a ribonucleoside 5'-triphosphate = RNA(n+1) + diphosphate. In terms of biological role, DNA-dependent RNA polymerase catalyzes the transcription of DNA into RNA using the four ribonucleoside triphosphates as substrates. In Clavibacter sepedonicus (Clavibacter michiganensis subsp. sepedonicus), this protein is DNA-directed RNA polymerase subunit beta.